A 741-amino-acid chain; its full sequence is uncharacterized protein (741 aa).

Residues Met-1–Arg-17 show a composition bias toward polar residues. Residues Met-1 to Pro-50 are disordered. Positions Gln-18–Leu-27 are enriched in basic and acidic residues. The RING-type 1; degenerate zinc-finger motif lies at Cys-107 to Arg-150. Composition is skewed to polar residues over residues Gly-177–Val-193, Pro-252–Ser-263, and Asn-277–Phe-302. Disordered stretches follow at residues Gly-177 to Val-214, Ser-238 to Arg-387, Gln-500 to Thr-543, Glu-561 to His-619, Ser-638 to Gln-688, and Arg-713 to Lys-741. Positions Thr-316–Thr-332 are enriched in low complexity. 2 stretches are compositionally biased toward polar residues: residues Asp-333–Ala-344 and Pro-357–Asn-386. 3 stretches are compositionally biased toward polar residues: residues Arg-563–Val-586, Glu-604–His-619, and Ser-652–Pro-661. An RING-type 2; degenerate zinc finger spans residues Cys-687–Arg-736. A compositionally biased stretch (basic and acidic residues) spans Glu-731 to Lys-741.

The protein resides in the nucleus. This is an uncharacterized protein from Schizosaccharomyces pombe (strain 972 / ATCC 24843) (Fission yeast).